A 142-amino-acid chain; its full sequence is Large ribosomal subunit protein uL16 (142 aa).

Positions 1–14 (MLSPRRTKFRKQQR) are enriched in basic residues. A disordered region spans residues 1-22 (MLSPRRTKFRKQQRGRMTGKAT).

It belongs to the universal ribosomal protein uL16 family. In terms of assembly, part of the 50S ribosomal subunit.

Binds 23S rRNA and is also seen to make contacts with the A and possibly P site tRNAs. In Synechococcus elongatus (strain ATCC 33912 / PCC 7942 / FACHB-805) (Anacystis nidulans R2), this protein is Large ribosomal subunit protein uL16.